We begin with the raw amino-acid sequence, 138 residues long: Large-conductance mechanosensitive channel (138 aa).

The next 3 membrane-spanning stretches (helical) occupy residues 15-35 (VDLAVGVIIGSAFGGLVNSVV), 38-58 (IFMPIIGLITGGIDFSNMFIQ), and 80-100 (GNFITLLINFLIISWILFFLV).

This sequence belongs to the MscL family. Homopentamer.

The protein resides in the cell inner membrane. In terms of biological role, channel that opens in response to stretch forces in the membrane lipid bilayer. May participate in the regulation of osmotic pressure changes within the cell. This is Large-conductance mechanosensitive channel from Bartonella bacilliformis (strain ATCC 35685 / KC583 / Herrer 020/F12,63).